The chain runs to 171 residues: Putative adenylate kinase (171 aa).

5 residues coordinate ATP: glycine 9, glycine 11, lysine 12, threonine 13, and threonine 14. The segment at 28–51 is NMP; the sequence is SLGELIRQKGFVLGRDPIRGYLEA. Residues 99–109 are LID; sequence GRGYPEGKVLE. Arginine 100 provides a ligand contact to ATP.

Belongs to the adenylate kinase family. AK6 subfamily. Interacts with uS11. Not a structural component of 40S pre-ribosomes, but transiently interacts with them by binding to uS11.

The catalysed reaction is AMP + ATP = 2 ADP. It catalyses the reaction ATP + H2O = ADP + phosphate + H(+). Functionally, broad-specificity nucleoside monophosphate (NMP) kinase that catalyzes the reversible transfer of the terminal phosphate group between nucleoside triphosphates and monophosphates. Also has ATPase activity. Involved in the late maturation steps of the 30S ribosomal particles, specifically 16S rRNA maturation. While NMP activity is not required for ribosome maturation, ATPase activity is. Associates transiently with small ribosomal subunit protein uS11. ATP hydrolysis breaks the interaction with uS11. May temporarily remove uS11 from the ribosome to enable a conformational change of the ribosomal RNA that is needed for the final maturation step of the small ribosomal subunit. The chain is Putative adenylate kinase from Methanothermobacter thermautotrophicus (strain ATCC 29096 / DSM 1053 / JCM 10044 / NBRC 100330 / Delta H) (Methanobacterium thermoautotrophicum).